We begin with the raw amino-acid sequence, 379 residues long: MKLKFELKKKNGNARRGQLIFERGTVQTPAFMPVGTYGTVKGMTPEEVKETGAQILLGNTFHLWLRPGQEVMKMHGDLHDFMNWQGPILTDSGGFQVFSLGDIRKITEEGVHFRNPVNGDKIFMDAEKSMEIQKDLGSDIVMIFDECTPYPATHDEAKKSMEMSLRWAKRSRDHFDKLENPNNLFGIVQGGVYEDLRDVSVKGLTEIGFDGYAVGGLAVGEPKEDMHRVLEHTCPQLPEDKPRYLMGVGKPEDLVEGVRRGIDMFDCVMPTRNARNGHLFVTGGVIKIRNAAHKTDTTPLDLHCDCYTCKNYSKSYLHHLDRCNEILGARLNTIHNLRYYQRLMESIRKAIDEDRFDQFVAEFYARRNREVPPLQKDKA.

The active-site Proton acceptor is Asp-91. Substrate contacts are provided by residues 91 to 95 (DSGGF), Asp-145, Gln-189, and Gly-216. An RNA binding region spans residues 247–253 (GVGKPED). Asp-266 acts as the Nucleophile in catalysis. An RNA binding; important for wobble base 34 recognition region spans residues 271 to 275 (TRNAR). Zn(2+) is bound by residues Cys-304, Cys-306, Cys-309, and His-335.

Belongs to the queuine tRNA-ribosyltransferase family. As to quaternary structure, homodimer. Within each dimer, one monomer is responsible for RNA recognition and catalysis, while the other monomer binds to the replacement base PreQ1. Zn(2+) serves as cofactor.

The enzyme catalyses 7-aminomethyl-7-carbaguanine + guanosine(34) in tRNA = 7-aminomethyl-7-carbaguanosine(34) in tRNA + guanine. Its pathway is tRNA modification; tRNA-queuosine biosynthesis. In terms of biological role, catalyzes the base-exchange of a guanine (G) residue with the queuine precursor 7-aminomethyl-7-deazaguanine (PreQ1) at position 34 (anticodon wobble position) in tRNAs with GU(N) anticodons (tRNA-Asp, -Asn, -His and -Tyr). Catalysis occurs through a double-displacement mechanism. The nucleophile active site attacks the C1' of nucleotide 34 to detach the guanine base from the RNA, forming a covalent enzyme-RNA intermediate. The proton acceptor active site deprotonates the incoming PreQ1, allowing a nucleophilic attack on the C1' of the ribose to form the product. After dissociation, two additional enzymatic reactions on the tRNA convert PreQ1 to queuine (Q), resulting in the hypermodified nucleoside queuosine (7-(((4,5-cis-dihydroxy-2-cyclopenten-1-yl)amino)methyl)-7-deazaguanosine). This chain is Queuine tRNA-ribosyltransferase, found in Vibrio cholerae serotype O1 (strain ATCC 39541 / Classical Ogawa 395 / O395).